We begin with the raw amino-acid sequence, 368 residues long: 3-dehydroquinate synthase (368 aa).

NAD(+) contacts are provided by residues Gly112–Asp116, Thr136–Thr137, Lys149, Lys158, and Phe176–Thr179. Positions 191, 257, and 274 each coordinate Zn(2+).

Belongs to the sugar phosphate cyclases superfamily. Dehydroquinate synthase family. Requires Co(2+) as cofactor. The cofactor is Zn(2+). NAD(+) serves as cofactor.

The protein resides in the cytoplasm. It carries out the reaction 7-phospho-2-dehydro-3-deoxy-D-arabino-heptonate = 3-dehydroquinate + phosphate. It participates in metabolic intermediate biosynthesis; chorismate biosynthesis; chorismate from D-erythrose 4-phosphate and phosphoenolpyruvate: step 2/7. Its function is as follows. Catalyzes the conversion of 3-deoxy-D-arabino-heptulosonate 7-phosphate (DAHP) to dehydroquinate (DHQ). This is 3-dehydroquinate synthase from Natranaerobius thermophilus (strain ATCC BAA-1301 / DSM 18059 / JW/NM-WN-LF).